The sequence spans 302 residues: 4-hydroxy-tetrahydrodipicolinate synthase (302 aa).

T55 is a binding site for pyruvate. Catalysis depends on Y143, which acts as the Proton donor/acceptor. The Schiff-base intermediate with substrate role is filled by K171. I213 provides a ligand contact to pyruvate.

Belongs to the DapA family. As to quaternary structure, homotetramer; dimer of dimers.

The protein resides in the cytoplasm. It carries out the reaction L-aspartate 4-semialdehyde + pyruvate = (2S,4S)-4-hydroxy-2,3,4,5-tetrahydrodipicolinate + H2O + H(+). The protein operates within amino-acid biosynthesis; L-lysine biosynthesis via DAP pathway; (S)-tetrahydrodipicolinate from L-aspartate: step 3/4. Functionally, catalyzes the condensation of (S)-aspartate-beta-semialdehyde [(S)-ASA] and pyruvate to 4-hydroxy-tetrahydrodipicolinate (HTPA). This chain is 4-hydroxy-tetrahydrodipicolinate synthase, found in Psychrobacter sp. (strain PRwf-1).